The chain runs to 285 residues: ATP phosphoribosyltransferase (285 aa).

It belongs to the ATP phosphoribosyltransferase family. Long subfamily. Mg(2+) serves as cofactor.

It is found in the cytoplasm. The enzyme catalyses 1-(5-phospho-beta-D-ribosyl)-ATP + diphosphate = 5-phospho-alpha-D-ribose 1-diphosphate + ATP. It functions in the pathway amino-acid biosynthesis; L-histidine biosynthesis; L-histidine from 5-phospho-alpha-D-ribose 1-diphosphate: step 1/9. Its activity is regulated as follows. Feedback inhibited by histidine. Its function is as follows. Catalyzes the condensation of ATP and 5-phosphoribose 1-diphosphate to form N'-(5'-phosphoribosyl)-ATP (PR-ATP). Has a crucial role in the pathway because the rate of histidine biosynthesis seems to be controlled primarily by regulation of HisG enzymatic activity. In Streptomyces avermitilis (strain ATCC 31267 / DSM 46492 / JCM 5070 / NBRC 14893 / NCIMB 12804 / NRRL 8165 / MA-4680), this protein is ATP phosphoribosyltransferase.